Consider the following 207-residue polypeptide: MFLSLLILLSYALGFVFCVVCLACGLYYFSELVEEHATVAKRWIKYTMWFVMGIIFLLGIFEDLDFTSLLFSFIGHCCYYTLLTEFPFVTLTGYKFILSVLSFIISHISWFIYFRNTENWYPFGEIIAIFTFCVWLIPLIFFISLAANDNSLPMANSYSSHSNSNIIGVDSEFTKKKSRISVLKSMFAWAKEKTSDITGQKSMKHYY.

4 helical membrane passes run 2–22, 54–74, 94–114, and 126–146; these read FLSL…VVCL, IIFL…FSFI, YKFI…FIYF, and IIAI…ISLA.

Belongs to the SVP26 family.

The protein localises to the membrane. The polypeptide is Protein TEX261 homolog (Dictyostelium discoideum (Social amoeba)).